The following is a 108-amino-acid chain: Nucleoid-associated protein Bpet3552 (108 aa).

It belongs to the YbaB/EbfC family. As to quaternary structure, homodimer.

Its subcellular location is the cytoplasm. The protein localises to the nucleoid. Its function is as follows. Binds to DNA and alters its conformation. May be involved in regulation of gene expression, nucleoid organization and DNA protection. This is Nucleoid-associated protein Bpet3552 from Bordetella petrii (strain ATCC BAA-461 / DSM 12804 / CCUG 43448).